The sequence spans 1037 residues: Presequence protease, mitochondrial (1037 aa).

The N-terminal 28 residues, 1–28, are a transit peptide targeting the mitochondrion; sequence MWRCGGRQGLCVLRRLSGGHAHHRAWRW. His104 is a Zn(2+) binding site. Residue Glu107 is the Proton acceptor of the active site. His108 contacts Zn(2+). The cysteines at positions 119 and 556 are disulfide-linked. Glu180 is an active-site residue. Zn(2+) is bound at residue Glu205. The residue at position 759 (Lys759) is an N6-acetyllysine. Lys770 carries the N6-acetyllysine; alternate modification. The residue at position 770 (Lys770) is an N6-succinyllysine; alternate. Basic residues predominate over residues 804–814; that stretch reads GRSKKERRPVR. The segment at 804–834 is disordered; that stretch reads GRSKKERRPVRPHTVEKPVPSSSGGDAHVPH. An N6-succinyllysine modification is found at Lys849. The residue at position 884 (Lys884) is an N6-acetyllysine. Lys946 is modified (N6-succinyllysine).

It belongs to the peptidase M16 family. PreP subfamily. In terms of assembly, monomer and homodimer; homodimerization is induced by binding of the substrate. Zn(2+) serves as cofactor. In terms of processing, a disulfide bond locks the enzyme in the closed conformation preventing substrate entry into the catalytic chamber. Widely expressed. Expressed at higher level in muscle and heart compared to brain, pancreas, liver, lung and placenta.

It is found in the mitochondrion. Its subcellular location is the mitochondrion matrix. Mainly exists in a closed and catalytically competent conformation but a closed-to-open switch allows substrate entry into the catalytic chamber. Substrate binding induces closure and dimerization. A disulfide bond may lock the enzyme in a closed conformation preventing substrate entry into the catalytic chamber, participating in redox regulation of the enzyme. Inhibited by metal-chelating agents. Inhibited by nickel and zinc excess, and slightly activated by manganese. Metalloendopeptidase of the mitochondrial matrix that functions in peptide cleavage and degradation rather than in protein processing. Has an ATP-independent activity. Specifically cleaves peptides in the range of 5 to 65 residues. Shows a preference for cleavage after small polar residues and before basic residues, but without any positional preference. Degrades the transit peptides of mitochondrial proteins after their cleavage. Also degrades other unstructured peptides. It is also able to degrade amyloid-beta protein 40, one of the peptides produced by APP processing, when it accumulates in mitochondrion. It is a highly efficient protease, at least toward amyloid-beta protein 40. Cleaves that peptide at a specific position and is probably not processive, releasing digested peptides intermediates that can be further cleaved subsequently. It is also able to degrade amyloid-beta protein 42. The protein is Presequence protease, mitochondrial of Homo sapiens (Human).